Consider the following 736-residue polypeptide: Capsid protein (736 aa).

Residues 633 to 692 are disordered; that stretch reads ESDALTLSPVHRPKRPKRDTQVKEKTPEKDSDSAVQLRRLQPWIHSSQETKDEEEEIPEG. A compositionally biased stretch (basic and acidic residues) spans 650 to 664; it reads RDTQVKEKTPEKDSD.

This sequence belongs to the anelloviridae capsid protein family.

It is found in the virion. Self assemble to form an icosahedral capsid. This chain is Capsid protein, found in Torque teno virus (isolate Human/Finland/Hel32/2002) (TTV).